The sequence spans 457 residues: Acetylcholine receptor subunit alpha (457 aa).

The first 20 residues, 1–20 (MEPRPLLLLLGLCSAGLVLG), serve as a signal peptide directing secretion. Topologically, residues 21–230 (SEHETRLVAK…ITYHFVMQRL (210 aa)) are extracellular. 2 cysteine pairs are disulfide-bonded: cysteine 148–cysteine 162 and cysteine 212–cysteine 213. Asparagine 161 carries an N-linked (GlcNAc...) asparagine glycan. The next 3 helical transmembrane spans lie at 231–255 (PLYF…VFYL), 263–281 (MTLS…LVIV), and 297–316 (YMLF…VIVI). Residues 317–428 (NTHHRSPSTH…WKYVAMVMDH (112 aa)) lie on the Cytoplasmic side of the membrane. A helical transmembrane segment spans residues 429–447 (ILLAVFMLVCIIGTLAVFA).

Belongs to the ligand-gated ion channel (TC 1.A.9) family. Acetylcholine receptor (TC 1.A.9.1) subfamily. Alpha-1/CHRNA1 sub-subfamily. One of the alpha chains that assemble within the acetylcholine receptor, a pentamer of two alpha chains, a beta, a delta, and a gamma (in immature muscle) or epsilon (in mature muscle) chains. The muscle heteropentamer composed of alpha-1, beta-1, delta, epsilon subunits interacts with the alpha-conotoxin ImII.

Its subcellular location is the postsynaptic cell membrane. It localises to the cell membrane. The catalysed reaction is K(+)(in) = K(+)(out). It catalyses the reaction Na(+)(in) = Na(+)(out). In terms of biological role, upon acetylcholine binding, the AChR responds by an extensive change in conformation that affects all subunits and leads to opening of an ion-conducting channel across the plasma membrane. This chain is Acetylcholine receptor subunit alpha (CHRNA1), found in Bos taurus (Bovine).